The sequence spans 600 residues: Elongation factor 4 (600 aa).

In terms of domain architecture, tr-type G spans Lys5–Lys187. Residues Asp17–Thr22 and Asn134–Asp137 each bind GTP.

The protein belongs to the TRAFAC class translation factor GTPase superfamily. Classic translation factor GTPase family. LepA subfamily.

Its subcellular location is the cell inner membrane. The catalysed reaction is GTP + H2O = GDP + phosphate + H(+). Required for accurate and efficient protein synthesis under certain stress conditions. May act as a fidelity factor of the translation reaction, by catalyzing a one-codon backward translocation of tRNAs on improperly translocated ribosomes. Back-translocation proceeds from a post-translocation (POST) complex to a pre-translocation (PRE) complex, thus giving elongation factor G a second chance to translocate the tRNAs correctly. Binds to ribosomes in a GTP-dependent manner. The sequence is that of Elongation factor 4 from Rickettsia prowazekii (strain Madrid E).